A 369-amino-acid chain; its full sequence is DNA replication and repair protein RecF (369 aa).

30–37 (GDNGSGKT) contributes to the ATP binding site.

It belongs to the RecF family.

The protein localises to the cytoplasm. The RecF protein is involved in DNA metabolism; it is required for DNA replication and normal SOS inducibility. RecF binds preferentially to single-stranded, linear DNA. It also seems to bind ATP. This is DNA replication and repair protein RecF from Pseudomonas paraeruginosa (strain DSM 24068 / PA7) (Pseudomonas aeruginosa (strain PA7)).